Consider the following 326-residue polypeptide: UDP-N-acetylglucosamine transporter (326 aa).

The next 8 membrane-spanning stretches (helical) occupy residues 4–24 (NLKY…VLTM), 38–58 (LSST…IFLV), 136–156 (LGMY…FVQW), 174–194 (FVGL…GVYF), 212–232 (LGFF…GELV), 243–263 (QLTW…AAVI), 269–289 (ILKG…SYFW), and 293–313 (FVPT…TFLY).

This sequence belongs to the nucleotide-sugar transporter family. SLC35A subfamily. Interacts with SLC35A2; the interaction is reduced in the presence of SLC35A4. Found in a complex with SLC35A2 and SLC35A4. Interacts with MGAT4B. O-Glcnacylation regulates the stability of SLC35A3 and the specific complex formation with MGAT4B.

The protein localises to the golgi apparatus membrane. It carries out the reaction UMP(out) + UDP-N-acetyl-alpha-D-glucosamine(in) = UMP(in) + UDP-N-acetyl-alpha-D-glucosamine(out). In terms of biological role, transports diphosphate-N-acetylglucosamine (UDP-GlcNAc) from the cytosol into the lumen of the Golgi apparatus, functioning as an antiporter that exchanges UDP-N-acetyl-alpha-D-glucosamine for UMP. May supply UDP-GlcNAc as substrate for Golgi-resident glycosyltransferases that generate highly branched, multiantennary complex N-glycans and keratan sulfate. However, the exact role of SLC35A3 still needs to be elucidated, it could be a member of a catalytically more efficient multiprotein complex rather than function independently as a single transporter. This Rattus norvegicus (Rat) protein is UDP-N-acetylglucosamine transporter (Slc35a3).